We begin with the raw amino-acid sequence, 335 residues long: Lipase chaperone (335 aa).

Residues 7–23 (LLPLAIALGLGFFIARP) traverse the membrane as a helical segment.

This sequence belongs to the lipase chaperone family.

The protein localises to the cell inner membrane. In terms of biological role, may be involved in the folding of the extracellular lipase during its passage through the periplasm. This chain is Lipase chaperone (lifO), found in Ectopseudomonas mendocina (Pseudomonas mendocina).